The sequence spans 526 residues: Glucose-6-phosphate 1-dehydrogenase (526 aa).

Residues glycine 50–lysine 57, arginine 84, and lysine 184 contribute to the NADP(+) site. D-glucose 6-phosphate is bound by residues lysine 184, histidine 214–lysine 218, glutamate 252, and aspartate 271. The Proton acceptor role is filled by histidine 276. Arginine 370 is a binding site for NADP(+). D-glucose 6-phosphate contacts are provided by lysine 373 and arginine 378. Residues lysine 379, arginine 383, and arginine 406 each contribute to the NADP(+) site. Glutamine 408 contacts D-glucose 6-phosphate. NADP(+) contacts are provided by residues tyrosine 414 to lysine 416, aspartate 434 to threonine 436, arginine 500, tyrosine 516, and tryptophan 522.

The protein belongs to the glucose-6-phosphate dehydrogenase family.

The protein resides in the cytoplasm. It is found in the cytosol. It catalyses the reaction D-glucose 6-phosphate + NADP(+) = 6-phospho-D-glucono-1,5-lactone + NADPH + H(+). Its pathway is carbohydrate degradation; pentose phosphate pathway; D-ribulose 5-phosphate from D-glucose 6-phosphate (oxidative stage): step 1/3. Cytosolic glucose-6-phosphate dehydrogenase that catalyzes the first and rate-limiting step of the oxidative branch within the pentose phosphate pathway/shunt, an alternative route to glycolysis for the dissimilation of carbohydrates and a major source of reducing power and metabolic intermediates for fatty acid and nucleic acid biosynthetic processes. This is Glucose-6-phosphate 1-dehydrogenase (ZW) from Ceratitis capitata (Mediterranean fruit fly).